Reading from the N-terminus, the 613-residue chain is Dihydroxy-acid dehydratase (613 aa).

Residue Asp81 participates in Mg(2+) binding. Cys122 contacts [2Fe-2S] cluster. Residues Asp123 and Lys124 each coordinate Mg(2+). Position 124 is an N6-carboxylysine (Lys124). Cys195 serves as a coordination point for [2Fe-2S] cluster. Glu491 provides a ligand contact to Mg(2+). Residue Ser517 is the Proton acceptor of the active site.

The protein belongs to the IlvD/Edd family. Homodimer. Requires [2Fe-2S] cluster as cofactor. It depends on Mg(2+) as a cofactor.

The enzyme catalyses (2R)-2,3-dihydroxy-3-methylbutanoate = 3-methyl-2-oxobutanoate + H2O. The catalysed reaction is (2R,3R)-2,3-dihydroxy-3-methylpentanoate = (S)-3-methyl-2-oxopentanoate + H2O. It functions in the pathway amino-acid biosynthesis; L-isoleucine biosynthesis; L-isoleucine from 2-oxobutanoate: step 3/4. The protein operates within amino-acid biosynthesis; L-valine biosynthesis; L-valine from pyruvate: step 3/4. In terms of biological role, functions in the biosynthesis of branched-chain amino acids. Catalyzes the dehydration of (2R,3R)-2,3-dihydroxy-3-methylpentanoate (2,3-dihydroxy-3-methylvalerate) into 2-oxo-3-methylpentanoate (2-oxo-3-methylvalerate) and of (2R)-2,3-dihydroxy-3-methylbutanoate (2,3-dihydroxyisovalerate) into 2-oxo-3-methylbutanoate (2-oxoisovalerate), the penultimate precursor to L-isoleucine and L-valine, respectively. The polypeptide is Dihydroxy-acid dehydratase (Buchnera aphidicola subsp. Melaphis rhois).